The sequence spans 373 residues: Anhydro-N-acetylmuramic acid kinase (373 aa).

13-20 is a binding site for ATP; sequence GTSMDGID.

It belongs to the anhydro-N-acetylmuramic acid kinase family.

The enzyme catalyses 1,6-anhydro-N-acetyl-beta-muramate + ATP + H2O = N-acetyl-D-muramate 6-phosphate + ADP + H(+). It participates in amino-sugar metabolism; 1,6-anhydro-N-acetylmuramate degradation. It functions in the pathway cell wall biogenesis; peptidoglycan recycling. Catalyzes the specific phosphorylation of 1,6-anhydro-N-acetylmuramic acid (anhMurNAc) with the simultaneous cleavage of the 1,6-anhydro ring, generating MurNAc-6-P. Is required for the utilization of anhMurNAc either imported from the medium or derived from its own cell wall murein, and thus plays a role in cell wall recycling. In Brucella suis (strain ATCC 23445 / NCTC 10510), this protein is Anhydro-N-acetylmuramic acid kinase.